The sequence spans 205 residues: Inactive ribonuclease-like protein 9 (205 aa).

A signal peptide spans 1–24 (MMLITTHSLPLLLLLLQLWQPLQF). Cystine bridges form between cysteine 97-cysteine 152, cysteine 115-cysteine 167, and cysteine 122-cysteine 129. N-linked (GlcNAc...) asparagine glycosylation is found at asparagine 130 and asparagine 142.

This sequence belongs to the pancreatic ribonuclease family.

It localises to the secreted. Functionally, does not exhibit any ribonuclease activity. This chain is Inactive ribonuclease-like protein 9 (RNASE9), found in Cebus albifrons (White-fronted capuchin).